We begin with the raw amino-acid sequence, 749 residues long: Cytosolic phospholipase A2 (749 aa).

The region spanning 1 to 124 is the C2 domain; it reads MASIDPYQHI…GEKKQVPFTF (124 aa). Positions 1–178 are phospholipid binding; that stretch reads MASIDPYQHI…LRKLLGPEKT (178 aa). Ca(2+) is bound by residues Asp40, Thr41, Asp43, Asn65, Asp93, Ala94, and Asn95. Residues 138–740 form the PLA2c domain; sequence VCSSTDLRFS…NDVESRKLHH (603 aa). Ser229 acts as the Nucleophile in catalysis. The tract at residues 428 to 452 is disordered; sequence HILGNDSSDSDDEMQEPKGTENAKA. The segment covering 442–452 has biased composition (basic and acidic residues); it reads QEPKGTENAKA. The active-site Proton acceptor is Asp549. Positions 729–749 are disordered; sequence SLNDVESRKLHHKDSQSKFQM. A compositionally biased stretch (basic and acidic residues) spans 733-749; the sequence is VESRKLHHKDSQSKFQM.

It is found in the cytoplasm. Its subcellular location is the cytoplasmic vesicle. The enzyme catalyses a 1,2-diacyl-sn-glycero-3-phosphocholine + H2O = a 1-acyl-sn-glycero-3-phosphocholine + a fatty acid + H(+). It carries out the reaction a 1-acyl-sn-glycero-3-phosphocholine + H2O = sn-glycerol 3-phosphocholine + a fatty acid + H(+). Stimulated by agonists such as ATP, EGF, thrombin and bradykinin as well as by cytosolic Ca(2+). Its function is as follows. Selectively hydrolyzes arachidonyl phospholipids in the sn-2 position releasing arachidonic acid. Together with its lysophospholipid activity, it is implicated in the initiation of the inflammatory response. This Xenopus laevis (African clawed frog) protein is Cytosolic phospholipase A2 (pla2g4a).